We begin with the raw amino-acid sequence, 119 residues long: Small ribosomal subunit protein bS6 (119 aa).

It belongs to the bacterial ribosomal protein bS6 family.

Its function is as follows. Binds together with bS18 to 16S ribosomal RNA. The chain is Small ribosomal subunit protein bS6 from Buchnera aphidicola subsp. Baizongia pistaciae (strain Bp).